The primary structure comprises 540 residues: Probable protein kinase UbiB (540 aa).

Residues 24-44 form a helical membrane-spanning segment; it reads LLFDQPLLPWWLASLRLLMPW. The region spanning 126–494 is the Protein kinase domain; sequence RFDVEPLASA…RRRQGDRWAL (369 aa). ATP contacts are provided by residues 132–140 and K154; that span reads LASASVAQV. The active-site Proton acceptor is the D289. The next 2 membrane-spanning stretches (helical) occupy residues 496-516 and 518-538; these read LLGAGLLGGGAVLAAGAAETA and LAAPAAWPAWLMLAAGLYLIV.

The protein belongs to the ABC1 family. UbiB subfamily.

It localises to the cell inner membrane. The protein operates within cofactor biosynthesis; ubiquinone biosynthesis [regulation]. Functionally, is probably a protein kinase regulator of UbiI activity which is involved in aerobic coenzyme Q (ubiquinone) biosynthesis. In Pseudomonas putida (strain ATCC 700007 / DSM 6899 / JCM 31910 / BCRC 17059 / LMG 24140 / F1), this protein is Probable protein kinase UbiB.